An 81-amino-acid chain; its full sequence is Large ribosomal subunit protein bL31 (81 aa).

Residues C16, C18, C36, and C39 each coordinate Zn(2+).

Belongs to the bacterial ribosomal protein bL31 family. Type A subfamily. In terms of assembly, part of the 50S ribosomal subunit. Requires Zn(2+) as cofactor.

Its function is as follows. Binds the 23S rRNA. This Rhodopirellula baltica (strain DSM 10527 / NCIMB 13988 / SH1) protein is Large ribosomal subunit protein bL31.